The sequence spans 134 residues: Histone H2B (134 aa).

Residues M1 to K10 show a composition bias toward polar residues. Disordered regions lie at residues M1–K29 and V113–R134. Basic and acidic residues predominate over residues A12–K29. Residues G125 to R134 are compositionally biased toward polar residues.

It belongs to the histone H2B family. As to quaternary structure, the nucleosome is a histone octamer containing two molecules each of H2A, H2B, H3 and H4 assembled in one H3-H4 heterotetramer and two H2A-H2B heterodimers. The octamer wraps approximately 147 bp of DNA.

The protein resides in the nucleus. The protein localises to the chromosome. Its function is as follows. Core component of nucleosome. Nucleosomes wrap and compact DNA into chromatin, limiting DNA accessibility to the cellular machineries which require DNA as a template. Histones thereby play a central role in transcription regulation, DNA repair, DNA replication and chromosomal stability. DNA accessibility is regulated via a complex set of post-translational modifications of histones, also called histone code, and nucleosome remodeling. The chain is Histone H2B from Entamoeba invadens.